The following is a 452-amino-acid chain: Pup--protein ligase (452 aa).

Mg(2+) is bound at residue E9. R53 is a binding site for ATP. Y55 provides a ligand contact to Mg(2+). D57 acts as the Proton acceptor in catalysis. E63 contacts Mg(2+). Positions 66 and 419 each coordinate ATP.

This sequence belongs to the Pup ligase/Pup deamidase family. Pup-conjugating enzyme subfamily.

It carries out the reaction ATP + [prokaryotic ubiquitin-like protein]-L-glutamate + [protein]-L-lysine = ADP + phosphate + N(6)-([prokaryotic ubiquitin-like protein]-gamma-L-glutamyl)-[protein]-L-lysine.. The protein operates within protein degradation; proteasomal Pup-dependent pathway. Its pathway is protein modification; protein pupylation. Catalyzes the covalent attachment of the prokaryotic ubiquitin-like protein modifier Pup to the proteasomal substrate proteins, thereby targeting them for proteasomal degradation. This tagging system is termed pupylation. The ligation reaction involves the side-chain carboxylate of the C-terminal glutamate of Pup and the side-chain amino group of a substrate lysine. This Mycobacteroides abscessus (strain ATCC 19977 / DSM 44196 / CCUG 20993 / CIP 104536 / JCM 13569 / NCTC 13031 / TMC 1543 / L948) (Mycobacterium abscessus) protein is Pup--protein ligase.